Here is a 122-residue protein sequence, read N- to C-terminus: Small ribosomal subunit protein uS13 (122 aa).

Basic residues predominate over residues 98–116 (VRGQKTKTNARTRKGRRKT). Residues 98–122 (VRGQKTKTNARTRKGRRKTVGAATK) are disordered.

This sequence belongs to the universal ribosomal protein uS13 family. In terms of assembly, part of the 30S ribosomal subunit. Forms a loose heterodimer with protein S19. Forms two bridges to the 50S subunit in the 70S ribosome.

Functionally, located at the top of the head of the 30S subunit, it contacts several helices of the 16S rRNA. In the 70S ribosome it contacts the 23S rRNA (bridge B1a) and protein L5 of the 50S subunit (bridge B1b), connecting the 2 subunits; these bridges are implicated in subunit movement. Contacts the tRNAs in the A and P-sites. This is Small ribosomal subunit protein uS13 from Campylobacter fetus subsp. fetus (strain 82-40).